A 751-amino-acid polypeptide reads, in one-letter code: Leucine-rich repeat-containing protein 56 homolog (751 aa).

Residues 1–149 form a disordered region; the sequence is MKKSTVLDAR…IDKSRDNGQL (149 aa). Positions 13–22 are enriched in pro residues; it reads GPLPRRPQQP. Composition is skewed to polar residues over residues 28–39 and 60–87; these read RNSSQVEKNNAR and HSQSQSLDTSFAPNTNTTLGSTDVNLNS. LRR repeat units follow at residues 210–235, 236–256, 258–279, 280–304, and 307–328; these read MPQLNSLKLNNSRITELRVLGTNYAN, LRRLWISNCLVSSVSGVGACA, VLEELYASFNSISDIDALTEVS, STLQVVDLEGNDIRDTDMLKRTLPQ, and KMKHLVLKGNPVASSETIVELS. Disordered regions lie at residues 430–538, 645–698, and 717–751; these read SRSH…QRQQ, TCTH…EKDW, and EAALKERVQGSKEVDGGGLEKVESEDEEDVSPVVF. Composition is skewed to polar residues over residues 456–471 and 662–671; these read KNSQSTASSGDSTNQG and QQEQPTTAGA. Positions 717 to 738 are enriched in basic and acidic residues; that stretch reads EAALKERVQGSKEVDGGGLEKV. Acidic residues predominate over residues 739 to 751; the sequence is ESEDEEDVSPVVF.

The protein belongs to the LRRC56 family.

It localises to the cell projection. It is found in the cilium. The protein resides in the flagellum. Its function is as follows. Required for the assembly of dynein arms in the distal portion of flagellum axoneme. The sequence is that of Leucine-rich repeat-containing protein 56 homolog from Trypanosoma brucei brucei (strain 927/4 GUTat10.1).